The chain runs to 532 residues: Phosphoenolpyruvate carboxylase (532 aa).

It belongs to the PEPCase type 2 family. In terms of assembly, homotetramer. The cofactor is Mg(2+).

The enzyme catalyses oxaloacetate + phosphate = phosphoenolpyruvate + hydrogencarbonate. Catalyzes the irreversible beta-carboxylation of phosphoenolpyruvate (PEP) to form oxaloacetate (OAA), a four-carbon dicarboxylic acid source for the tricarboxylic acid cycle. The polypeptide is Phosphoenolpyruvate carboxylase (Methanopyrus kandleri (strain AV19 / DSM 6324 / JCM 9639 / NBRC 100938)).